A 183-amino-acid chain; its full sequence is Phosphopantetheine adenylyltransferase (183 aa).

Ser8 serves as a coordination point for substrate. Residues 8 to 9 (SF) and His16 contribute to the ATP site. Residues Lys40, Thr72, and Arg86 each contribute to the substrate site. ATP is bound by residues 87–89 (GLR), Glu97, and 122–128 (YSFLSSS).

Belongs to the bacterial CoaD family. Homohexamer. Mg(2+) is required as a cofactor.

The protein resides in the cytoplasm. It carries out the reaction (R)-4'-phosphopantetheine + ATP + H(+) = 3'-dephospho-CoA + diphosphate. It participates in cofactor biosynthesis; coenzyme A biosynthesis; CoA from (R)-pantothenate: step 4/5. Its function is as follows. Reversibly transfers an adenylyl group from ATP to 4'-phosphopantetheine, yielding dephospho-CoA (dPCoA) and pyrophosphate. In Nostoc punctiforme (strain ATCC 29133 / PCC 73102), this protein is Phosphopantetheine adenylyltransferase.